Here is a 331-residue protein sequence, read N- to C-terminus: Nacrein-like protein P1 (331 aa).

An Alpha-carbonic anhydrase domain is found at 1-331; sequence QSPINIVSYD…LHALRNVEGY (331 aa). 3 residues coordinate Zn(2+): His-69, His-71, and His-94. The segment at 138–240 is disordered; it reads DEPDDEECKR…GENGHKHGCR (103 aa). The span at 144 to 156 shows a compositional bias: basic and acidic residues; sequence ECKRILKGHHPDN. Residues 157–232 are compositionally biased toward low complexity; the sequence is NENGNGDNGN…NNGENGNNGE (76 aa). Tandem repeats lie at residues 162-164, 165-167, 168-170, 171-173, 174-176, 177-179, 180-182, 183-185, 186-188, 189-191, 192-194, 195-197, 198-200, 201-203, 204-206, 207-209, 210-212, 213-215, 216-218, 219-221, 222-224, 225-227, 228-229, and 231-233. A 24 X 3 AA approximate tandem repeats of G-X-N region spans residues 162 to 233; it reads GDNGNNGYNG…NGENGNNGEN (72 aa). 298–299 provides a ligand contact to substrate; it reads TT.

Belongs to the alpha-carbonic anhydrase family. As to quaternary structure, homooligomer; disulfide-linked. May also be disulfide-linked to insoluble organic matrix. The cofactor is Zn(2+). In terms of tissue distribution, expressed in the mantle.

It is found in the secreted. It localises to the extracellular space. Its subcellular location is the extracellular matrix. The catalysed reaction is hydrogencarbonate + H(+) = CO2 + H2O. In terms of biological role, acts as a negative regulator for calcification in the shells of mollusks. May function both as a calcium concentrator and as a carbonic anhydrase required for production of carbonate ions, which are assembled to CaCO(3) at mineralization sites. Is important for shell formation in both the calcitic prismatic layer and the aragonitic nacreous layer. Shows inhibitory activity of crystal formation when present in free state but, when attached to the insoluble matrix, may regulate the form and size of aragonite crystal. In Mizuhopecten yessoensis (Japanese scallop), this protein is Nacrein-like protein P1.